The sequence spans 396 residues: Elongation factor Tu (396 aa).

Residues 10-206 (KPHCNIGTIG…AVDEFIPQPT (197 aa)) form the tr-type G domain. The segment at 19-26 (GHVDHGKT) is G1. 19 to 26 (GHVDHGKT) is a GTP binding site. Mg(2+) is bound at residue T26. Residues 60-64 (GITIS) form a G2 region. The G3 stretch occupies residues 81–84 (DCPG). GTP contacts are provided by residues 81–85 (DCPGH) and 136–139 (NKVD). Residues 136 to 139 (NKVD) form a G4 region. Positions 174 to 176 (SAL) are G5.

It belongs to the TRAFAC class translation factor GTPase superfamily. Classic translation factor GTPase family. EF-Tu/EF-1A subfamily. In terms of assembly, monomer.

Its subcellular location is the cytoplasm. The catalysed reaction is GTP + H2O = GDP + phosphate + H(+). Functionally, GTP hydrolase that promotes the GTP-dependent binding of aminoacyl-tRNA to the A-site of ribosomes during protein biosynthesis. The chain is Elongation factor Tu from Pelagibacter ubique (strain HTCC1062).